Consider the following 601-residue polypeptide: Alpha-terpineol synthase, chloroplastic (601 aa).

Residues 1 to 47 (MSTISIHHVGILRNPLHSKSKRASINKPWSLSLPRSSSASRLVEPCR) constitute a chloroplast transit peptide. The Mn(2+) site is built by D357 and D361. Positions 357–361 (DDVYD) match the DDXXD motif motif. 2 homodimerization regions span residues 363–369 (YGTLDEL) and 435–471 (EAEW…ELSL). 2 residues coordinate Mn(2+): D499 and E507.

The protein belongs to the terpene synthase family. Homodimer. The cofactor is Mn(2+). Mg(2+) is required as a cofactor.

It localises to the plastid. Its subcellular location is the chloroplast. It catalyses the reaction (2E)-geranyl diphosphate + H2O = (S)-alpha-terpineol + diphosphate. The catalysed reaction is (2E)-geranyl diphosphate + H2O = (R)-alpha-terpineol + diphosphate. Its pathway is secondary metabolite biosynthesis; terpenoid biosynthesis. Its function is as follows. Involved in the biosynthesis of phenolic monoterpenes natural products. Monoterpene synthase which catalyzes the conversion of geranyl diphosphate (GPP) to alpha-terpineol (isomer is not determined). This is Alpha-terpineol synthase, chloroplastic from Thymus caespititius (Cretan thyme).